A 968-amino-acid polypeptide reads, in one-letter code: RNA polymerase-associated protein RapA (968 aa).

In terms of domain architecture, Helicase ATP-binding spans 164–334 (DVGRRHAPRV…FARLRLLDPN (171 aa)). 177–184 (DEVGLGKT) is a binding site for ATP. The DEAH box motif lies at 280–283 (DEAH). The Helicase C-terminal domain occupies 490–662 (RVEWLMGYLT…YLASPDQTEG (173 aa)).

It belongs to the SNF2/RAD54 helicase family. RapA subfamily. Interacts with the RNAP. Has a higher affinity for the core RNAP than for the holoenzyme. Its ATPase activity is stimulated by binding to RNAP.

Functionally, transcription regulator that activates transcription by stimulating RNA polymerase (RNAP) recycling in case of stress conditions such as supercoiled DNA or high salt concentrations. Probably acts by releasing the RNAP, when it is trapped or immobilized on tightly supercoiled DNA. Does not activate transcription on linear DNA. Probably not involved in DNA repair. This is RNA polymerase-associated protein RapA from Escherichia coli O139:H28 (strain E24377A / ETEC).